Reading from the N-terminus, the 276-residue chain is Integrin-binding sialoprotein (276 aa).

Residues 1–16 (MRSALLLACLLATASA) form the signal peptide. Positions 54–251 (HRYKGSDSSE…EEPARGDSYR (198 aa)) are disordered. Over residues 61–75 (SSEEEGDGSEEEEEG) the composition is skewed to acidic residues. Positions 106 to 119 (QDCKGGQKGTRGDS) are enriched in basic and acidic residues. Residues 116–118 (RGD) carry the Cell attachment site motif. Positions 120–144 (GDEDSDEEEEEEEEEEEEEEVEEQD) are enriched in acidic residues. A compositionally biased stretch (polar residues) spans 145–165 (VSVNGTSTNTTAETPHGNNTV). 3 N-linked (GlcNAc...) asparagine glycosylation sites follow: Asn148, Asn153, and Asn162. A compositionally biased stretch (acidic residues) spans 167–188 (AEEEEDDDEEEEEEEEEEEEAE). The segment covering 189–200 (ATTAAATTAQDE) has biased composition (low complexity). The short motif at 228–230 (RGD) is the Cell attachment site element. Positions 246-248 (RGD) match the Integrin-binding motif motif. Sulfotyrosine occurs at positions 272 and 273.

In terms of assembly, monomer. Interacts with integrins; the interaction promotes cell adhesion. Post-translationally, phosphorylated on serine and threonine residues.

It localises to the secreted. In terms of biological role, binds tightly to hydroxyapatite. Appears to form an integral part of the mineralized matrix. Probably important to cell-matrix interaction. Promotes adhesion and migration of various cells via the alpha-V/beta-3 integrin receptor (ITGAV:ITGB3). This chain is Integrin-binding sialoprotein (IBSP), found in Gallus gallus (Chicken).